We begin with the raw amino-acid sequence, 264 residues long: Major prion protein 1 (264 aa).

The signal sequence occupies residues 1 to 24 (MVKSHIGSWILVLFVAMWSDVALC). The interval 25-241 (KKRPKPGGGW…ESEAYYQRGA (217 aa)) is interaction with GRB2, ERI3 and SYN1. The disordered stretch occupies residues 28–118 (PKPGGGWNTG…QWNKPSKPKT (91 aa)). Repeat copies occupy residues 54 to 62 (SQGGGGWGQ), 63 to 70 (PHGGGWGQ), 71 to 78 (PHGGGWGQ), 79 to 86 (PHGGGWGQ), 87 to 94 (PHGGGWGQ), and 95 to 103 (PHGGGGWGQ). Residues 54–103 (SQGGGGWGQPHGGGWGQPHGGGWGQPHGGGWGQPHGGGWGQPHGGGGWGQ) are 6 X 8 AA tandem repeats of P-H-G-G-G-W-G-Q. Residues 55–107 (QGGGGWGQPHGGGWGQPHGGGWGQPHGGGWGQPHGGGWGQPHGGGGWGQGGTH) show a composition bias toward gly residues. Residues H72, G73, G74, H80, G81, G82, H88, G89, G90, H96, G98, and G99 each contribute to the Cu(2+) site. A disulfide bridge links C190 with C225. N-linked (GlcNAc...) asparagine glycans are attached at residues N192 and N208. A241 carries the GPI-anchor amidated alanine lipid modification. The propeptide at 242–264 (SVILFSSPPVILLISFLIFLIVG) is removed in mature form.

It belongs to the prion family. As to quaternary structure, monomer and homodimer. Has a tendency to aggregate into amyloid fibrils containing a cross-beta spine, formed by a steric zipper of superposed beta-strands. Soluble oligomers may represent an intermediate stage on the path to fibril formation. Copper binding may promote oligomerization. Interacts with GRB2, APP, ERI3/PRNPIP and SYN1. Mislocalized cytosolically exposed PrP interacts with MGRN1; this interaction alters MGRN1 subcellular location and causes lysosomal enlargement. Interacts with KIAA1191.

The protein localises to the cell membrane. Its subcellular location is the golgi apparatus. Its function is as follows. Its primary physiological function is unclear. Has cytoprotective activity against internal or environmental stresses. May play a role in neuronal development and synaptic plasticity. May be required for neuronal myelin sheath maintenance. May play a role in iron uptake and iron homeostasis. Soluble oligomers are toxic to cultured neuroblastoma cells and induce apoptosis (in vitro). Association with GPC1 (via its heparan sulfate chains) targets PRNP to lipid rafts. Also provides Cu(2+) or Zn(2+) for the ascorbate-mediated GPC1 deaminase degradation of its heparan sulfate side chains. The polypeptide is Major prion protein 1 (Tragelaphus strepsiceros (Greater kudu)).